A 472-amino-acid polypeptide reads, in one-letter code: Aspartyl/glutamyl-tRNA(Asn/Gln) amidotransferase subunit B (472 aa).

This sequence belongs to the GatB/GatE family. GatB subfamily. Heterotrimer of A, B and C subunits.

It carries out the reaction L-glutamyl-tRNA(Gln) + L-glutamine + ATP + H2O = L-glutaminyl-tRNA(Gln) + L-glutamate + ADP + phosphate + H(+). The enzyme catalyses L-aspartyl-tRNA(Asn) + L-glutamine + ATP + H2O = L-asparaginyl-tRNA(Asn) + L-glutamate + ADP + phosphate + 2 H(+). Its function is as follows. Allows the formation of correctly charged Asn-tRNA(Asn) or Gln-tRNA(Gln) through the transamidation of misacylated Asp-tRNA(Asn) or Glu-tRNA(Gln) in organisms which lack either or both of asparaginyl-tRNA or glutaminyl-tRNA synthetases. The reaction takes place in the presence of glutamine and ATP through an activated phospho-Asp-tRNA(Asn) or phospho-Glu-tRNA(Gln). The chain is Aspartyl/glutamyl-tRNA(Asn/Gln) amidotransferase subunit B from Elusimicrobium minutum (strain Pei191).